Consider the following 205-residue polypeptide: Small ribosomal subunit protein uS4 (205 aa).

The disordered stretch occupies residues 19–45 (IWGRPKSPVNRREYGPGQHGQRRKGKL). Residues 94–157 (SRLDAVVYRA…KQLAIVLEAV (64 aa)) enclose the S4 RNA-binding domain.

It belongs to the universal ribosomal protein uS4 family. As to quaternary structure, part of the 30S ribosomal subunit. Contacts protein S5. The interaction surface between S4 and S5 is involved in control of translational fidelity.

Functionally, one of the primary rRNA binding proteins, it binds directly to 16S rRNA where it nucleates assembly of the body of the 30S subunit. With S5 and S12 plays an important role in translational accuracy. This Brucella suis biovar 1 (strain 1330) protein is Small ribosomal subunit protein uS4.